A 98-amino-acid chain; its full sequence is Large ribosomal subunit protein bL27 (98 aa).

The propeptide occupies 1 to 13 (MKKIWFHLDLQFF).

The protein belongs to the bacterial ribosomal protein bL27 family. In terms of processing, the N-terminus is cleaved by ribosomal processing cysteine protease Prp.

This chain is Large ribosomal subunit protein bL27, found in Mycoplasmoides gallisepticum (strain R(low / passage 15 / clone 2)) (Mycoplasma gallisepticum).